Here is a 206-residue protein sequence, read N- to C-terminus: Small ribosomal subunit protein uS4 (206 aa).

Residues 18 to 46 form a disordered region; it reads NIWGRPKSPVNRREYGPGQHGQRRKQKMS. Positions 94-154 constitute an S4 RNA-binding domain; sequence RRLDAVVYRA…EKSRQMAALL (61 aa).

The protein belongs to the universal ribosomal protein uS4 family. Part of the 30S ribosomal subunit. Contacts protein S5. The interaction surface between S4 and S5 is involved in control of translational fidelity.

Its function is as follows. One of the primary rRNA binding proteins, it binds directly to 16S rRNA where it nucleates assembly of the body of the 30S subunit. Functionally, with S5 and S12 plays an important role in translational accuracy. In Dinoroseobacter shibae (strain DSM 16493 / NCIMB 14021 / DFL 12), this protein is Small ribosomal subunit protein uS4.